The primary structure comprises 611 residues: Phosphomethylpyrimidine synthase (611 aa).

Substrate contacts are provided by residues Asn212, Met241, Tyr270, His306, 326-328, 367-370, and Glu406; these read SRG and DGLR. His410 contributes to the Zn(2+) binding site. Substrate is bound at residue Tyr433. His474 is a Zn(2+) binding site. [4Fe-4S] cluster contacts are provided by Cys554, Cys557, and Cys562.

This sequence belongs to the ThiC family. As to quaternary structure, homodimer. The cofactor is [4Fe-4S] cluster.

It carries out the reaction 5-amino-1-(5-phospho-beta-D-ribosyl)imidazole + S-adenosyl-L-methionine = 4-amino-2-methyl-5-(phosphooxymethyl)pyrimidine + CO + 5'-deoxyadenosine + formate + L-methionine + 3 H(+). Its pathway is cofactor biosynthesis; thiamine diphosphate biosynthesis. Catalyzes the synthesis of the hydroxymethylpyrimidine phosphate (HMP-P) moiety of thiamine from aminoimidazole ribotide (AIR) in a radical S-adenosyl-L-methionine (SAM)-dependent reaction. This chain is Phosphomethylpyrimidine synthase, found in Bartonella bacilliformis (strain ATCC 35685 / KC583 / Herrer 020/F12,63).